The primary structure comprises 162 residues: Protein SLM4 (162 aa).

The chain crosses the membrane as a helical span at residues L127 to I144.

In terms of assembly, component of the GSE complex composed of GTR1, GTR2, SLM4, MEH1 and LTV1. Component of the EGO complex, at least composed of GTR2, SLM4 and MEH1.

The protein localises to the vacuole membrane. Its function is as follows. Component of the GSE complex, a GTPase complex required for intracellular sorting of GAP1 out of the endosome. Component of the EGO complex, a complex involved in the regulation of microautophagy. This Saccharomyces cerevisiae (strain ATCC 204508 / S288c) (Baker's yeast) protein is Protein SLM4 (SLM4).